The sequence spans 160 residues: MSRRHVAEKRIILPDMKYNSILLSRFINNIMKAGKKAVAEKIVYSAFNKIEKKHSVDPYQTFNNAMHNVKPHLEVTSVRVGGANYQVPTHVDERRGYALASRWIINAASKRSEKMMIDKLAEELFEAANNRGVAIKKKEDIHKMAEANKAFSHFSPKKMK.

It belongs to the universal ribosomal protein uS7 family. Part of the 30S ribosomal subunit. Contacts proteins S9 and S11.

One of the primary rRNA binding proteins, it binds directly to 16S rRNA where it nucleates assembly of the head domain of the 30S subunit. Is located at the subunit interface close to the decoding center, probably blocks exit of the E-site tRNA. The sequence is that of Small ribosomal subunit protein uS7 from Rickettsia typhi (strain ATCC VR-144 / Wilmington).